The primary structure comprises 209 residues: Guanylate kinase (209 aa).

A Guanylate kinase-like domain is found at glycine 5 to glutamate 184. ATP is bound at residue glycine 12–glycine 19.

The protein belongs to the guanylate kinase family.

Its subcellular location is the cytoplasm. It catalyses the reaction GMP + ATP = GDP + ADP. In terms of biological role, essential for recycling GMP and indirectly, cGMP. This Streptococcus agalactiae serotype Ia (strain ATCC 27591 / A909 / CDC SS700) protein is Guanylate kinase.